The following is a 68-amino-acid chain: Alpha-conotoxin Lp1.1 (68 aa).

Positions 1–21 (MGMRMMFIMFMLVVLATTVVT) are cleaved as a signal peptide. The propeptide occupies 22–48 (FTSDRALDAMNAAASNKASRLIALAVR). Intrachain disulfides connect C50/C56 and C51/C64. A lacks the Ser-Xaa-Pro motif that is crucial for potent interaction with nAChR region spans residues 52–54 (ARA). G65 carries the glycine amide modification. Residues 66 to 68 (GGR) constitute a propeptide that is removed on maturation.

This sequence belongs to the conotoxin A superfamily. In terms of tissue distribution, expressed by the venom duct.

The protein localises to the secreted. Its function is as follows. Alpha-conotoxins act on postsynaptic membranes, they bind to the nicotinic acetylcholine receptors (nAChR) and thus inhibit them. Synthetic peptide inhibits alpha-6/alpha-3/beta-2 and alpha-3/beta-2 nicotinic acetylcholine receptors and causes uncoordinated movement when intramuscularly injected into goldfish. Has a distinct nAChR binding mode from other alpha-conotoxins, due to a different three residue motif (Ala-Xaa-Ala instead of the conserved Ser-Xaa-Pro motif). This chain is Alpha-conotoxin Lp1.1, found in Conus leopardus (Leopard cone).